Here is a 256-residue protein sequence, read N- to C-terminus: Small ribosomal subunit protein uS2 (256 aa).

The protein belongs to the universal ribosomal protein uS2 family.

The protein is Small ribosomal subunit protein uS2 of Brucella anthropi (strain ATCC 49188 / DSM 6882 / CCUG 24695 / JCM 21032 / LMG 3331 / NBRC 15819 / NCTC 12168 / Alc 37) (Ochrobactrum anthropi).